Consider the following 337-residue polypeptide: Ferrochelatase (337 aa).

Fe cation is bound by residues His189 and Glu293.

It belongs to the ferrochelatase family.

It localises to the cytoplasm. It carries out the reaction heme b + 2 H(+) = protoporphyrin IX + Fe(2+). Its pathway is porphyrin-containing compound metabolism; protoheme biosynthesis; protoheme from protoporphyrin-IX: step 1/1. Its function is as follows. Catalyzes the ferrous insertion into protoporphyrin IX. The sequence is that of Ferrochelatase from Pseudomonas entomophila (strain L48).